The sequence spans 156 residues: Small ribosomal subunit protein uS7 (156 aa).

It belongs to the universal ribosomal protein uS7 family. In terms of assembly, part of the 30S ribosomal subunit. Contacts proteins S9 and S11.

Functionally, one of the primary rRNA binding proteins, it binds directly to 16S rRNA where it nucleates assembly of the head domain of the 30S subunit. Is located at the subunit interface close to the decoding center, probably blocks exit of the E-site tRNA. This is Small ribosomal subunit protein uS7 from Mycobacterium leprae (strain TN).